Reading from the N-terminus, the 163-residue chain is Superoxide dismutase [Mn] (163 aa).

Mn(2+) contacts are provided by histidine 2, histidine 50, aspartate 134, and histidine 138.

It belongs to the iron/manganese superoxide dismutase family. The cofactor is Mn(2+).

It carries out the reaction 2 superoxide + 2 H(+) = H2O2 + O2. Its function is as follows. Destroys superoxide anion radicals which are normally produced within the cells and which are toxic to biological systems. The protein is Superoxide dismutase [Mn] (sodA) of Mycobacterium kansasii.